The primary structure comprises 415 residues: Serine hydroxymethyltransferase (415 aa).

Residues L117 and 121-123 (GHL) contribute to the (6S)-5,6,7,8-tetrahydrofolate site. At K226 the chain carries N6-(pyridoxal phosphate)lysine. (6S)-5,6,7,8-tetrahydrofolate contacts are provided by residues E241 and 349-351 (SPF).

Belongs to the SHMT family. In terms of assembly, homodimer. The cofactor is pyridoxal 5'-phosphate.

The protein resides in the cytoplasm. It carries out the reaction (6R)-5,10-methylene-5,6,7,8-tetrahydrofolate + glycine + H2O = (6S)-5,6,7,8-tetrahydrofolate + L-serine. Its pathway is one-carbon metabolism; tetrahydrofolate interconversion. It participates in amino-acid biosynthesis; glycine biosynthesis; glycine from L-serine: step 1/1. In terms of biological role, catalyzes the reversible interconversion of serine and glycine with tetrahydrofolate (THF) serving as the one-carbon carrier. This reaction serves as the major source of one-carbon groups required for the biosynthesis of purines, thymidylate, methionine, and other important biomolecules. Also exhibits THF-independent aldolase activity toward beta-hydroxyamino acids, producing glycine and aldehydes, via a retro-aldol mechanism. In Geotalea uraniireducens (strain Rf4) (Geobacter uraniireducens), this protein is Serine hydroxymethyltransferase.